A 300-amino-acid polypeptide reads, in one-letter code: LysM and putative peptidoglycan-binding domain-containing protein 3 (300 aa).

Residues 1-216 are Extracellular-facing; that stretch reads MAGRNQNRTA…PYYGADWGMG (216 aa). N-linked (GlcNAc...) asparagine glycosylation is found at Asn-7 and Asn-26. Ser-55 is modified (phosphoserine). The 45-residue stretch at 65 to 109 folds into the LysM domain; sequence LTKDIQEGDTLNAVALQYCCTVADIKRVNNLISDQDFFALRSIKI. The tract at residues 136–157 is disordered; that stretch reads PYFQEQDTVPANDSPSSSESAG. Positions 140 to 156 are enriched in polar residues; sequence EQDTVPANDSPSSSESA. A glycan (N-linked (GlcNAc...) asparagine) is linked at Asn-199. Residues 217–237 traverse the membrane as a helical segment; it reads WWTAVVIMLIVGIITPVFYLL. At 238–300 the chain is on the cytoplasmic side; sequence YYEILAKVDV…LYRQDPQARD (63 aa). The segment at 253–300 is disordered; it reads VDSSHLHPGLTPPSHHREMGNAIGPTKGIPVGQQDDHRLYRQDPQARD. Over residues 286–300 the composition is skewed to basic and acidic residues; sequence QDDHRLYRQDPQARD.

It localises to the cell membrane. The protein resides in the golgi apparatus. In terms of biological role, essential for Golgi structural integrity. In Rattus norvegicus (Rat), this protein is LysM and putative peptidoglycan-binding domain-containing protein 3 (Lysmd3).